We begin with the raw amino-acid sequence, 109 residues long: Large ribosomal subunit protein uL22 (109 aa).

This sequence belongs to the universal ribosomal protein uL22 family. As to quaternary structure, part of the 50S ribosomal subunit.

This protein binds specifically to 23S rRNA; its binding is stimulated by other ribosomal proteins, e.g. L4, L17, and L20. It is important during the early stages of 50S assembly. It makes multiple contacts with different domains of the 23S rRNA in the assembled 50S subunit and ribosome. Functionally, the globular domain of the protein is located near the polypeptide exit tunnel on the outside of the subunit, while an extended beta-hairpin is found that lines the wall of the exit tunnel in the center of the 70S ribosome. This is Large ribosomal subunit protein uL22 from Herminiimonas arsenicoxydans.